Here is a 339-residue protein sequence, read N- to C-terminus: MSSSSSSGAATGFAVCSDPQKSFSKMFKRTVILLAGPTGSGKTAVSLKLAPLVDGEIISVDSMQVYQGMDIGTAKVSLADRKEVPHHLIDVCHVQESFNAVDFYYHAVQACQDILSRNKVPILVGGTGFYFHTFLSGPPSGPSPDFVLREQLTLEAQERGISALYQELELLDPVYAATITKHDKNKIIRALEIIRKTGSKVSSYAWQSTVNESKEYHCRGWLLSPDPELLRHNILERCDQMLEEGLLDEVQALLAAGIKGNSSASRAIGYREWIEFLDLGSPPDLFEITKQKFITNTWRYTKKQRTWFKRYSLFRELRPMGMTLDDMAKKIAQDYFLCG.

ATP is bound at residue Gly-36–Thr-43. Position 38–43 (Thr-38–Thr-43) interacts with substrate. Residues Asp-61–Gln-64 form an interaction with substrate tRNA region.

It belongs to the IPP transferase family. In terms of assembly, monomer. Mg(2+) is required as a cofactor.

The enzyme catalyses adenosine(37) in tRNA + dimethylallyl diphosphate = N(6)-dimethylallyladenosine(37) in tRNA + diphosphate. In terms of biological role, catalyzes the transfer of a dimethylallyl group onto the adenine at position 37 in tRNAs that read codons beginning with uridine, leading to the formation of N6-(dimethylallyl)adenosine (i(6)A). The polypeptide is tRNA dimethylallyltransferase (Chlamydia trachomatis serovar L2 (strain ATCC VR-902B / DSM 19102 / 434/Bu)).